A 149-amino-acid chain; its full sequence is Protegrin-5 (149 aa).

The N-terminal stretch at 1-29 is a signal peptide; the sequence is METQRASLCLGRWSLWLLLLGLVVPSASA. A propeptide spanning residues 30–130 is cleaved from the precursor; it reads QALSYREAVL…DITCNEVQGV (101 aa). Residues 61–80 form a disordered region; the sequence is DQPPKADEDPGTPKPVSFTV. Intrachain disulfides connect C85-C96, C107-C124, C136-C145, and C138-C143. R148 carries the arginine amide modification.

It belongs to the cathelicidin family.

The protein resides in the secreted. In terms of biological role, microbicidal activity. The polypeptide is Protegrin-5 (NPG5) (Sus scrofa (Pig)).